A 455-amino-acid chain; its full sequence is Kynurenine 3-monooxygenase (455 aa).

It belongs to the aromatic-ring hydroxylase family. KMO subfamily. Requires FAD as cofactor.

The enzyme catalyses L-kynurenine + NADPH + O2 + H(+) = 3-hydroxy-L-kynurenine + NADP(+) + H2O. It functions in the pathway cofactor biosynthesis; NAD(+) biosynthesis; quinolinate from L-kynurenine: step 1/3. Its function is as follows. Catalyzes the hydroxylation of L-kynurenine (L-Kyn) to form 3-hydroxy-L-kynurenine (L-3OHKyn). Required for synthesis of quinolinic acid. The sequence is that of Kynurenine 3-monooxygenase from Stenotrophomonas maltophilia (strain K279a).